The following is a 251-amino-acid chain: Esterase mlcF (251 aa).

Active-site charge relay system residues include Ser126, Asp193, and His221.

It belongs to the LovG family.

The enzyme catalyses dihydro-ML-236C-[compactin nonaketide synthase] + H2O = holo-[compactin nonaketide synthase] + dihydro-ML-236C carboxylate + H(+). Its pathway is polyketide biosynthesis. Its function is as follows. Esterase; part of the gene cluster that mediates the biosynthesis of compactin, also known as mevastatin or ML-236B, and which acts as a potent competitive inhibitor of HMG-CoA reductase. Compactin biosynthesis is performed in two stages. The first stage is catalyzed by the nonaketide synthase mlcA, which belongs to type I polyketide synthases and catalyzes the iterative nine-step formation of the polyketide. This PKS stage is completed by the action of dehydrogenase mlcG, which catalyzes the NADPH-dependent reduction of the unsaturated tetra-, penta- and heptaketide intermediates that arise during the mlcA-mediated biosynthesis of the nonaketide chain and leads to dihydro-ML-236C carboxylate. Covalently bound dihydro-ML-236C carboxylate is released from mlcA by the mlcF esterase. Conversion of dihydro-ML-236C carboxylate into ML-236A carboxylate is subsequently performed with the participation of molecular oxygen and P450 monoogygenase mlcC. Finally, mlcH performs the conversion of ML-236A carboxylate to ML-236B/compactin carboxylate through the addition of the side-chain diketide moiety produced by the diketide synthase mlcB. In Penicillium citrinum, this protein is Esterase mlcF.